A 402-amino-acid chain; its full sequence is Flavohemoprotein (402 aa).

Residues 1 to 136 (MLSEKTIEIV…IADAFISIEA (136 aa)) enclose the Globin domain. Residue histidine 85 participates in heme b binding. Active-site charge relay system residues include tyrosine 95 and glutamate 135. The segment at 147 to 402 (GGWKDFRNFV…EFFGPAASLQ (256 aa)) is reductase. Residues 150-260 (KDFRNFVVVK…SAPAGDFVLN (111 aa)) enclose the FAD-binding FR-type domain. Residues tyrosine 188 and 204-207 (RQYS) each bind FAD. 273–278 (GVGITP) contributes to the NADP(+) binding site. Residue 394–397 (FFGP) coordinates FAD.

This sequence belongs to the globin family. Two-domain flavohemoproteins subfamily. It in the C-terminal section; belongs to the flavoprotein pyridine nucleotide cytochrome reductase family. The cofactor is heme b. It depends on FAD as a cofactor.

The enzyme catalyses 2 nitric oxide + NADPH + 2 O2 = 2 nitrate + NADP(+) + H(+). It carries out the reaction 2 nitric oxide + NADH + 2 O2 = 2 nitrate + NAD(+) + H(+). Its function is as follows. Is involved in NO detoxification in an aerobic process, termed nitric oxide dioxygenase (NOD) reaction that utilizes O(2) and NAD(P)H to convert NO to nitrate, which protects the bacterium from various noxious nitrogen compounds. Therefore, plays a central role in the inducible response to nitrosative stress. This is Flavohemoprotein from Bacillus thuringiensis subsp. konkukian (strain 97-27).